The chain runs to 258 residues: Transmembrane O-methyltransferase homolog (258 aa).

S-adenosyl-L-methionine-binding positions include Glu-104, 106-107 (GT), Ser-112, Glu-130, and Ser-160.

This sequence belongs to the class I-like SAM-binding methyltransferase superfamily. Cation-dependent O-methyltransferase family. As to quaternary structure, interacts with LHFPL5, PCDH15, TMC1, TMC2 and TMIE. Interacts directly with TMC1. The interaction of TOMT with TMC1 and TMC2 is required for the transportation of TMC1/2 into the stereocilia of hair cells.

It is found in the cytoplasm. The protein resides in the endoplasmic reticulum. The enzyme catalyses a catechol + S-adenosyl-L-methionine = a guaiacol + S-adenosyl-L-homocysteine + H(+). Catalyzes the O-methylation, and thereby the inactivation, of catecholamine neurotransmitters and catechol hormones. Required for auditory function. Component of the cochlear hair cell's mechanotransduction (MET) machinery. Involved in the assembly of the asymmetric tip-link MET complex. Required for transportation of TMC1 and TMC2 proteins into the mechanically sensitive stereocilia of the hair cells. The function in MET is independent of the enzymatic activity. In Rattus norvegicus (Rat), this protein is Transmembrane O-methyltransferase homolog.